The following is a 440-amino-acid chain: Diaminopimelate decarboxylase (440 aa).

Lys61 is modified (N6-(pyridoxal phosphate)lysine). Pyridoxal 5'-phosphate contacts are provided by residues Gly234 and 275-278; that span reads EPGR. Substrate contacts are provided by Arg278, Arg314, and Tyr318. The active-site Proton donor is the Cys348. Substrate-binding residues include Glu349 and Tyr384. Tyr384 contributes to the pyridoxal 5'-phosphate binding site. Positions 421-431 are enriched in low complexity; sequence LAPELEPGPAL. Residues 421–440 form a disordered region; sequence LAPELEPGPALSPRPSRDPR.

This sequence belongs to the Orn/Lys/Arg decarboxylase class-II family. LysA subfamily. As to quaternary structure, homodimer. The cofactor is pyridoxal 5'-phosphate.

The enzyme catalyses meso-2,6-diaminopimelate + H(+) = L-lysine + CO2. It participates in amino-acid biosynthesis; L-lysine biosynthesis via DAP pathway; L-lysine from DL-2,6-diaminopimelate: step 1/1. Specifically catalyzes the decarboxylation of meso-diaminopimelate (meso-DAP) to L-lysine. The sequence is that of Diaminopimelate decarboxylase from Streptomyces coelicolor (strain ATCC BAA-471 / A3(2) / M145).